A 439-amino-acid chain; its full sequence is uncharacterized protein (439 aa).

In terms of domain architecture, DAGKc spans 65–208; sequence TRPKRVFVLV…VYAFELTTEG (144 aa).

This is an uncharacterized protein from Caenorhabditis elegans.